A 514-amino-acid chain; its full sequence is Threonine synthase (514 aa).

N6-(pyridoxal phosphate)lysine is present on lysine 124. 5 residues coordinate pyridoxal 5'-phosphate: glycine 277, asparagine 278, phenylalanine 279, aspartate 281, and threonine 449. Serine 467 bears the Phosphoserine mark.

It belongs to the threonine synthase family. Pyridoxal 5'-phosphate is required as a cofactor.

It carries out the reaction O-phospho-L-homoserine + H2O = L-threonine + phosphate. It functions in the pathway amino-acid biosynthesis; L-threonine biosynthesis; L-threonine from L-aspartate: step 5/5. In terms of biological role, catalyzes the gamma-elimination of phosphate from L-phosphohomoserine and the beta-addition of water to produce L-threonine. This Saccharomyces cerevisiae (strain ATCC 204508 / S288c) (Baker's yeast) protein is Threonine synthase (THR4).